Reading from the N-terminus, the 71-residue chain is MLFETLKSLSQQNGGQFSDEQSFESPISSSFNGHSMPFGSPSSTMSSSYKGNTNSSTKSSSAFFSRPFYSE.

The tract at residues Met-1–Glu-71 is disordered. Residues Lys-7–Gly-33 show a composition bias toward polar residues. Residues Ser-35 to Ser-65 are compositionally biased toward low complexity.

This is an uncharacterized protein from Dictyostelium discoideum (Social amoeba).